The chain runs to 599 residues: Elongation factor 4 (599 aa).

In terms of domain architecture, tr-type G spans serine 5–threonine 187. GTP is bound by residues aspartate 17–threonine 22 and asparagine 134–aspartate 137.

The protein belongs to the TRAFAC class translation factor GTPase superfamily. Classic translation factor GTPase family. LepA subfamily.

It is found in the cell inner membrane. It catalyses the reaction GTP + H2O = GDP + phosphate + H(+). Its function is as follows. Required for accurate and efficient protein synthesis under certain stress conditions. May act as a fidelity factor of the translation reaction, by catalyzing a one-codon backward translocation of tRNAs on improperly translocated ribosomes. Back-translocation proceeds from a post-translocation (POST) complex to a pre-translocation (PRE) complex, thus giving elongation factor G a second chance to translocate the tRNAs correctly. Binds to ribosomes in a GTP-dependent manner. The polypeptide is Elongation factor 4 (Ectopseudomonas mendocina (strain ymp) (Pseudomonas mendocina)).